The primary structure comprises 642 residues: Zinc finger protein 14 (642 aa).

The region spanning 4–76 is the KRAB domain; that stretch reads VSFEDVAVNF…MVERLCESRK (73 aa). The disordered stretch occupies residues 77–99; that stretch reads GSKCGETTSQMPNVNINKETSTG. Residues 81–99 show a composition bias toward polar residues; it reads GETTSQMPNVNINKETSTG. Residues 103-125 form a C2H2-type 1 zinc finger; the sequence is HECSFCGKDFMHHSSLNRHMRSH. The C2H2-type 2; degenerate zinc-finger motif lies at 141–163; sequence CKRKAVGKTFSYRHCVRKHERTH. Residues 169 to 191 form a C2H2-type 3 zinc finger; the sequence is YECKQCGKAFIYYQPFQRHERIH. Residues 197-217 form a C2H2-type 4; atypical zinc finger; sequence YECKQCGKTFIYYQSFQKHAH. 15 consecutive C2H2-type zinc fingers follow at residues 223–245, 251–273, 279–301, 307–329, 335–357, 363–385, 391–413, 419–441, 447–469, 475–497, 503–525, 531–553, 559–581, 587–609, and 615–637; these read YECK…ERTH, YKCK…KRTH, YECK…VITH, YKCK…ERTH, YECK…ETTH, YECK…ERSH, YECK…EKIH, FECK…ERTH, YQCK…ERTH, and YRCK…ERSH.

Belongs to the krueppel C2H2-type zinc-finger protein family.

The protein resides in the nucleus. Functionally, may be involved in transcriptional regulation. This is Zinc finger protein 14 (ZNF14) from Macaca fascicularis (Crab-eating macaque).